We begin with the raw amino-acid sequence, 217 residues long: Transmembrane protein 247 (217 aa).

The span at 1–10 shows a compositional bias: basic and acidic residues; the sequence is MATEDREMME. The segment at 1–87 is disordered; that stretch reads MATEDREMME…GPATTKGQAG (87 aa). Positions 109–154 form a coiled coil; that stretch reads RERDAEMELEKVRMEFELKRLKYLHEENERQRQHEEVMEQLQQQAT. Transmembrane regions (helical) follow at residues 165 to 185 and 192 to 212; these read LLLP…IHII and IFFL…LCLI.

It localises to the membrane. This chain is Transmembrane protein 247, found in Bos taurus (Bovine).